The primary structure comprises 474 residues: Nitrosuccinate lyase (474 aa).

Ser295 serves as the catalytic Proton acceptor. 2 residues coordinate fumarate: Lys301 and Asn303. Catalysis depends on Arg334, which acts as the Proton donor.

Belongs to the class-II fumarase/aspartase family.

It catalyses the reaction 2-nitrobutanedioate = fumarate + nitrite + H(+). In terms of biological role, involved in the biosynthesis of desferrioxamine derivatives which have iron-binding properties and may act as siderophores. Catalyzes the formation of nitrous acid from nitrosuccinic acid (2-nitrobutanedioate) by elimination of its nitro group. The polypeptide is Nitrosuccinate lyase (Streptomyces davaonensis (strain DSM 101723 / JCM 4913 / KCC S-0913 / 768)).